The following is a 208-amino-acid chain: Ribosomal RNA small subunit methyltransferase J (208 aa).

Residues 54 to 55, 70 to 71, and aspartate 122 each bind S-adenosyl-L-methionine; these read RD and ER.

It belongs to the methyltransferase superfamily. RsmJ family.

The protein localises to the cytoplasm. The enzyme catalyses guanosine(1516) in 16S rRNA + S-adenosyl-L-methionine = N(2)-methylguanosine(1516) in 16S rRNA + S-adenosyl-L-homocysteine + H(+). Its function is as follows. Specifically methylates the guanosine in position 1516 of 16S rRNA. This chain is Ribosomal RNA small subunit methyltransferase J, found in Agrobacterium fabrum (strain C58 / ATCC 33970) (Agrobacterium tumefaciens (strain C58)).